The chain runs to 424 residues: PtdIns3K complex I subunit atg38 (424 aa).

A coiled-coil region spans residues 50 to 78 (LIKRCANNQIEELMVRIRELRESLPNKQT). Residues 73-212 (LPNKQTPISM…DPAYQNTNEQ (140 aa)) are required for interaction with atg8. An AIM motif is present at residues 178 to 181 (FLIV). Over residues 268 to 284 (LSEEEMGRSHKREESFK) the composition is skewed to basic and acidic residues. The interval 268–299 (LSEEEMGRSHKREESFKRAFGHASSSESSIGE) is disordered. Residues 390 to 420 (TVDSQLKIKQLETQIATLQKQLEQFQTSTLD) adopt a coiled-coil conformation.

This sequence belongs to the ATG38 family. In terms of assembly, component of the autophagy-specific vps34 PI3-kinase complex I composed of vps15, atg6, pik3/vps34, atg14 and atg38. Interacts (via AIM motif) with atg8; the interaction is direct and leads to recruitment of the autophagy-specific vps34 PI3-kinase complex I to the phagophore assembly site.

The protein resides in the preautophagosomal structure membrane. It localises to the cytoplasm. The protein localises to the cytosol. In terms of biological role, functions as a part of the autophagy-specific VPS34 PI3-kinase complex I that plays a role in autophagosome assembly. This complex is essential to recruit the atg8-phosphatidylinositol conjugate and the atg12-atg5 conjugate to the pre-autophagosomal structure. By binding to atg8 at the phagophore assembly site, atg38 helps establish a positive feedback loop for recruitment of phagophore assembly proteins, including atg8. This chain is PtdIns3K complex I subunit atg38, found in Schizosaccharomyces pombe (strain 972 / ATCC 24843) (Fission yeast).